A 317-amino-acid chain; its full sequence is MRHLLSAADLTRDEATAILDDADRFLQALAGREVKKLPTLRGRTIITMFYENSTRTRVSFEVAGKWMSADVINVSASGSSVAKGESLRDTALTLRAIGADALIVRHPASGVAAQLAQWTAEGEGGPAVVNAGDGTHEHPTQALLDALTIRQRLGSLEGRRVVIVGDILHSRVARSNALLLNTFGAEVVLVAPPTLLPVGVGTWPVTVTHDLDAELPGADAVLMLRVQAERMTGGFFPSAREYSVLYGMSEARQRLLPEHAVVLHPGPMLRGMEIASAVADSSQSGVLQQVSNGVHIRMAVLFHLLVGSSDSPEAVPA.

Arg-55 and Thr-56 together coordinate carbamoyl phosphate. Position 83 (Lys-83) interacts with L-aspartate. Carbamoyl phosphate contacts are provided by Arg-105, His-138, and Gln-141. Arg-171 and Arg-225 together coordinate L-aspartate. Carbamoyl phosphate contacts are provided by Gly-266 and Pro-267.

Belongs to the aspartate/ornithine carbamoyltransferase superfamily. ATCase family. In terms of assembly, heterododecamer (2C3:3R2) of six catalytic PyrB chains organized as two trimers (C3), and six regulatory PyrI chains organized as three dimers (R2).

The catalysed reaction is carbamoyl phosphate + L-aspartate = N-carbamoyl-L-aspartate + phosphate + H(+). It functions in the pathway pyrimidine metabolism; UMP biosynthesis via de novo pathway; (S)-dihydroorotate from bicarbonate: step 2/3. In terms of biological role, catalyzes the condensation of carbamoyl phosphate and aspartate to form carbamoyl aspartate and inorganic phosphate, the committed step in the de novo pyrimidine nucleotide biosynthesis pathway. The sequence is that of Aspartate carbamoyltransferase catalytic subunit from Mycobacteroides abscessus (strain ATCC 19977 / DSM 44196 / CCUG 20993 / CIP 104536 / JCM 13569 / NCTC 13031 / TMC 1543 / L948) (Mycobacterium abscessus).